A 1116-amino-acid polypeptide reads, in one-letter code: Error-prone DNA polymerase (1116 aa).

The protein belongs to the DNA polymerase type-C family. DnaE2 subfamily.

The protein localises to the cytoplasm. It catalyses the reaction DNA(n) + a 2'-deoxyribonucleoside 5'-triphosphate = DNA(n+1) + diphosphate. In terms of biological role, DNA polymerase involved in damage-induced mutagenesis and translesion synthesis (TLS). It is not the major replicative DNA polymerase. The protein is Error-prone DNA polymerase of Sinorhizobium medicae (strain WSM419) (Ensifer medicae).